Here is a 295-residue protein sequence, read N- to C-terminus: Aquaporin-9 (295 aa).

At Met-1–Lys-24 the chain is on the cytoplasmic side. Residues Glu-25–Cys-43 form a helical membrane-spanning segment. The Extracellular segment spans residues Val-44–Val-57. A helical membrane pass occupies residues Ile-58 to Gly-77. The Cytoplasmic portion of the chain corresponds to Val-78–Ser-79. An intramembrane region (discontinuously helical) is located at residues Gly-80–Cys-92. The NPA 1 motif lies at Asn-84–Ala-86. The Cytoplasmic portion of the chain corresponds to Leu-93–Lys-98. Residues Trp-99–Ile-123 traverse the membrane as a helical segment. Over Tyr-124–Asn-160 the chain is Extracellular. A helical membrane pass occupies residues Ala-161–Ala-178. Residues Ile-179 to Gly-190 are Cytoplasmic-facing. A helical transmembrane segment spans residues Leu-191–Leu-207. Residues Gly-208–Asn-210 lie on the Extracellular side of the membrane. The segment at residues Ser-211 to Leu-225 is an intramembrane region (discontinuously helical). Positions Asn-216–Ala-218 match the NPA 2 motif. Topologically, residues Phe-226–Phe-243 are extracellular. The helical transmembrane segment at Trp-244 to Leu-264 threads the bilayer. Over Val-265 to Met-295 the chain is Cytoplasmic.

The protein belongs to the MIP/aquaporin (TC 1.A.8) family. Homotetramer; each monomer provides an independent glycerol/water pore. Highly expressed in peripheral leukocytes. Also expressed in liver, lung, and spleen.

The protein resides in the cell membrane. It is found in the basolateral cell membrane. The catalysed reaction is glycerol(in) = glycerol(out). It carries out the reaction H2O(in) = H2O(out). The enzyme catalyses urea(in) = urea(out). It catalyses the reaction (S)-lactate(in) = (S)-lactate(out). The catalysed reaction is NH4(+)(in) = NH4(+)(out). It carries out the reaction uracil(in) = uracil(out). The enzyme catalyses adenine(out) = adenine(in). It catalyses the reaction 3-hydroxybutanoate(in) = 3-hydroxybutanoate(out). The catalysed reaction is D-sorbitol(in) = D-sorbitol(out). It carries out the reaction D-mannitol(in) = D-mannitol(out). The enzyme catalyses H2O2(out) = H2O2(in). It catalyses the reaction arsenite(in) = arsenite(out). The catalysed reaction is selenite(in) = selenite(out). Its function is as follows. Aquaglyceroporins form homotetrameric transmembrane channels, with each monomer independently mediating glycerol and water transport across the plasma membrane along their osmotic gradient. AQP9 is the primary route for glycerol uptake in hepatocytes, supporting hepatic gluconeogenesis. It exhibits broad specificity and may transport various small, non-charged solutes, including carbamides, polyols, purines, and pyrimidines. AQP9 may also facilitate hepatic urea extrusion. Due to its permeability to lactate, AQP9 might participate in the astrocyte-to-neuron lactate shuttle, supplying neurons with energy. Additionally, AQP9 is permeable to arsenite, contributing to arsenic excretion by the liver and providing partial protection against arsenic toxicity. It is also permeable to H2O2 in vivo. Could also be permeable to ammonium. The chain is Aquaporin-9 from Homo sapiens (Human).